Consider the following 529-residue polypeptide: MSESLLQTVVAYVELVLHHFMALSWTQQLSIVIVAPFIYSLVWQTLYSFRKDRVPLVPFMVPWVGSALAYGRAPYEFFGKCQQKYGDVFAFMLLGRVMTVYLGTKGHEFILNAKLAEVSAEEAYTKLTTPVFGEGVVYDCPNHRLMEQKKFCKNALSTEAFRRYVPMVMDEVRKYLRTSKHFMMNERSSGVVNVMETQPEMTIFTASRSLLGAEMHSMLDADFAYLYADLDKGFTPLNFVFRDLPLDNYRRRDNAQRTISSTYMKVIERRRKNNDVQDRDLIDALMTSAQYKDGVKMTDQQIANLLIGVLMGGQHTSAATSAWVLLHLAERPDIQEELYEEQMRVLDGGAKELTYELLQEMPLLNQVIKETLRMHHPLHSLFRKVTRDMPVPNTSYVIPKDHYVLASPGFCHLSEEYFPNAKEFNPHRWDNDAASSVSTGEKVDYGFGAISKGVSSPYLPFGGGRHRCIGEGFAYMQLGTIFSVVVRSMKWHFPADMKGVPNPDFTSMVTLPSEPCRIAWERRVPDQII.

Cysteine 468 serves as a coordination point for heme.

The protein belongs to the cytochrome P450 family. Heme serves as cofactor.

Its subcellular location is the membrane. It catalyses the reaction a 14alpha-methyl steroid + 3 reduced [NADPH--hemoprotein reductase] + 3 O2 = a Delta(14) steroid + formate + 3 oxidized [NADPH--hemoprotein reductase] + 4 H2O + 4 H(+). It carries out the reaction a 14alpha-methyl steroid + reduced [NADPH--hemoprotein reductase] + O2 = a 14alpha-hydroxymethyl steroid + oxidized [NADPH--hemoprotein reductase] + H2O + H(+). The enzyme catalyses a 14alpha-hydroxymethyl steroid + reduced [NADPH--hemoprotein reductase] + O2 = a 14alpha-formyl steroid + oxidized [NADPH--hemoprotein reductase] + 2 H2O + H(+). The catalysed reaction is a 14alpha-formyl steroid + reduced [NADPH--hemoprotein reductase] + O2 = a Delta(14) steroid + formate + oxidized [NADPH--hemoprotein reductase] + H2O + 2 H(+). It catalyses the reaction lanosterol + 3 reduced [NADPH--hemoprotein reductase] + 3 O2 = 4,4-dimethyl-5alpha-cholesta-8,14,24-trien-3beta-ol + formate + 3 oxidized [NADPH--hemoprotein reductase] + 4 H2O + 4 H(+). It carries out the reaction lanosterol + reduced [NADPH--hemoprotein reductase] + O2 = 32-hydroxylanosterol + oxidized [NADPH--hemoprotein reductase] + H2O + H(+). The enzyme catalyses 32-hydroxylanosterol + reduced [NADPH--hemoprotein reductase] + O2 = 32-oxolanosterol + oxidized [NADPH--hemoprotein reductase] + 2 H2O + H(+). The catalysed reaction is 32-oxolanosterol + reduced [NADPH--hemoprotein reductase] + O2 = 4,4-dimethyl-5alpha-cholesta-8,14,24-trien-3beta-ol + formate + oxidized [NADPH--hemoprotein reductase] + H2O + 2 H(+). It catalyses the reaction eburicol + 3 reduced [NADPH--hemoprotein reductase] + 3 O2 = 14-demethyleburicol + formate + 3 oxidized [NADPH--hemoprotein reductase] + 4 H2O + 4 H(+). It carries out the reaction eburicol + reduced [NADPH--hemoprotein reductase] + O2 = 32-hydroxyeburicol + oxidized [NADPH--hemoprotein reductase] + H2O + H(+). The enzyme catalyses 32-hydroxyeburicol + reduced [NADPH--hemoprotein reductase] + O2 = 32-oxoeburicol + oxidized [NADPH--hemoprotein reductase] + 2 H2O + H(+). The catalysed reaction is 32-oxoeburicol + reduced [NADPH--hemoprotein reductase] + O2 = 14-demethyleburicol + formate + oxidized [NADPH--hemoprotein reductase] + H2O + 2 H(+). It participates in steroid biosynthesis; zymosterol biosynthesis; zymosterol from lanosterol: step 1/6. Functionally, sterol 14alpha-demethylase that plays a critical role in the third module of ergosterol biosynthesis pathway, being ergosterol the major sterol component in fungal membranes that participates in a variety of functions. The third module or late pathway involves the ergosterol synthesis itself through consecutive reactions that mainly occur in the endoplasmic reticulum (ER) membrane. In filamentous fungi, during the initial step of this module, lanosterol (lanosta-8,24-dien-3beta-ol) can be metabolized to eburicol. Sterol 14alpha-demethylase catalyzes the three-step oxidative removal of the 14alpha-methyl group (C-32) of both these sterols in the form of formate, and converts eburicol and lanosterol to 14-demethyleburicol (4,4,24-trimethylergosta-8,14,24(28)-trienol) and 4,4-dimethyl-5alpha-cholesta-8,14,24-trien-3beta-ol, respectively, which are further metabolized by other enzymes in the pathway to ergosterol. Can also use substrates not intrinsic to fungi, such as 24,25-dihydrolanosterol (DHL), producing 4,4-dimethyl-8,14-cholestadien-3-beta-ol, but at lower rates than the endogenous substrates. This Eremothecium gossypii (strain ATCC 10895 / CBS 109.51 / FGSC 9923 / NRRL Y-1056) (Yeast) protein is Lanosterol 14-alpha demethylase (ERG11).